The following is a 466-amino-acid chain: Coagulation factor VII (466 aa).

The signal sequence occupies residues 1–20 (MVSQALRLLCLLLGLQGCLA). Residues 21–60 (AGGVAKASGGETRDMPWKPGPHRVFVTQEEAHGVLHRRRR) constitute a propeptide that is removed on maturation. A Gla domain is found at 61 to 105 (ANAFLEELRPGSLERECKEEQCSFEEAREIFKDAERTKLFWISYS). 4-carboxyglutamate is present on residues Glu-66, Glu-67, Glu-74, Glu-76, Glu-79, Glu-80, Glu-85, Glu-86, Glu-89, and Glu-95. A disulfide bridge connects residues Cys-77 and Cys-82. Residues 106-142 (DGDQCASSPCQNGGSCKDQLQSYICFCLPAFEGRNCE) enclose the EGF-like 1; calcium-binding domain. 10 cysteine pairs are disulfide-bonded: Cys-110-Cys-121, Cys-115-Cys-130, Cys-132-Cys-141, Cys-151-Cys-162, Cys-158-Cys-172, Cys-174-Cys-187, Cys-195-Cys-322, Cys-219-Cys-224, Cys-238-Cys-254, and Cys-370-Cys-389. O-linked (Glc...) serine; alternate glycosylation occurs at Ser-112. Ser-112 carries an O-linked (Xyl...) serine; alternate glycan. Ser-120 carries an O-linked (Fuc) serine glycan. The residue at position 123 (Asp-123) is a (3R)-3-hydroxyaspartate. The 42-residue stretch at 147–188 (DQLICVNENGGCEQYCSDHTGTKRSCRCHEGYSLLADGVSCT) folds into the EGF-like 2 domain. Asn-205 carries N-linked (GlcNAc...) asparagine glycosylation. Residues 213–452 (IVGGKVCPKG…YIEWLQKLMR (240 aa)) form the Peptidase S1 domain. Residues His-253 and Asp-302 each act as charge relay system in the active site. An N-linked (GlcNAc...) asparagine glycan is attached at Asn-382. A substrate-binding site is contributed by Asp-398. A disulfide bond links Cys-400 and Cys-428. Ser-404 (charge relay system) is an active-site residue.

It belongs to the peptidase S1 family. As to quaternary structure, heterodimer of a light chain and a heavy chain linked by a disulfide bond. Interacts (activated) with iripin-8, a serine protease inhibitor from Ixodes ricinus saliva. In terms of processing, the vitamin K-dependent, enzymatic carboxylation of some glutamate residues allows the modified protein to bind calcium. The iron and 2-oxoglutarate dependent 3-hydroxylation of aspartate and asparagine is (R) stereospecific within EGF domains. Post-translationally, O- and N-glycosylated. N-glycosylation at Asn-205 occurs cotranslationally and is mediated by STT3A-containing complexes, while glycosylation at Asn-382 is post-translational and is mediated STT3B-containing complexes before folding. O-fucosylated by POFUT1 on a conserved serine or threonine residue found in the consensus sequence C2-X(4,5)-[S/T]-C3 of EGF domains, where C2 and C3 are the second and third conserved cysteines. In terms of processing, can be either O-glucosylated or O-xylosylated at Ser-112 by POGLUT1 in vitro. Plasma.

The protein resides in the secreted. It catalyses the reaction Selective cleavage of Arg-|-Ile bond in factor X to form factor Xa.. Its function is as follows. Initiates the extrinsic pathway of blood coagulation. Serine protease that circulates in the blood in a zymogen form. Factor VII is converted to factor VIIa by factor Xa, factor XIIa, factor IXa, or thrombin by minor proteolysis. In the presence of tissue factor and calcium ions, factor VIIa then converts factor X to factor Xa by limited proteolysis. Factor VIIa also converts factor IX to factor IXa in the presence of tissue factor and calcium. The sequence is that of Coagulation factor VII (F7) from Homo sapiens (Human).